An 876-amino-acid chain; its full sequence is E3 ubiquitin-protein ligase TRIM71 (876 aa).

The RING-type zinc finger occupies 12–90 (CPLCKEMCGS…ALKLRCPICD (79 aa)). Low complexity predominate over residues 26–40 (SSNSSTSSSSSQTSG). 2 disordered regions span residues 26–46 (SSNS…GGGG) and 128–192 (KNGR…AALL). The span at 137 to 148 (PAAGSGAGGGGA) shows a compositional bias: gly residues. Residues 160 to 182 (RAAAAASSPAAGSAAPSASSSSS) are compositionally biased toward low complexity. A B box-type 1; atypical zinc finger spans residues 200–247 (QGEPRCSSCDEGNAASSRCLDCQEHLCDNCVRAHQRVRLTKDHFIERF). Zn(2+) is bound by residues C205, C208, C229, H233, C286, H289, C309, and H314. A B box-type 2 zinc finger spans residues 281–322 (ERASYCQHHDDEVLHFYCDTCSVPICRECTMGRHVGHSFIYL). Coiled-coil stretches lie at residues 344–373 (RQAI…SEVK) and 399–434 (QVKA…EEGR). A Filamin repeat occupies 487-588 (SSGAFAPLTK…IENSPFKVVV (102 aa)). NHL repeat units lie at residues 601–644 (GLSF…FKPC), 648–691 (HHKF…FTFE), 695–738 (ILKF…FGPD), 742–785 (LNKY…IHAD), 789–832 (ARFL…FESN), and 836–876 (LCKF…ILVF).

Belongs to the TRIM/RBCC family.

The protein localises to the cytoplasm. It localises to the P-body. It catalyses the reaction S-ubiquitinyl-[E2 ubiquitin-conjugating enzyme]-L-cysteine + [acceptor protein]-L-lysine = [E2 ubiquitin-conjugating enzyme]-L-cysteine + N(6)-ubiquitinyl-[acceptor protein]-L-lysine.. It participates in protein modification; protein ubiquitination. Its function is as follows. E3 ubiquitin-protein ligase that cooperates with the microRNAs (miRNAs) machinery and promotes embryonic stem cells proliferation and maintenance. Binds to miRNAs and participates in post-transcriptional repression of transcripts. Required to maintain proliferation and prevent premature differentiation of neural progenitor cells during early neural development. This chain is E3 ubiquitin-protein ligase TRIM71 (TRIM71), found in Gallus gallus (Chicken).